Consider the following 594-residue polypeptide: Putative 3,4-dihydroxy-2-butanone kinase (594 aa).

One can recognise a DhaK domain in the interval 11–341 (DPNDVVTEFI…LDAPTKAPNW (331 aa)). Residues 62–65 (GSGH), K113, and D118 contribute to the substrate site. Residue H226 is the Tele-hemiaminal-histidine intermediate of the active site. A disordered region spans residues 339–358 (PNWPVGAEGNRPPAKIPVPL). Residues 381 to 585 (HILETAIEAA…AAAWYRAAAL (205 aa)) enclose the DhaL domain. Residues 410-413 (DGDC), 455-456 (TS), G499, 507-508 (TL), and 570-572 (DPG) each bind ATP.

The protein belongs to the dihydroxyacetone kinase (DAK) family.

The chain is Putative 3,4-dihydroxy-2-butanone kinase (DHBK) from Solanum lycopersicum (Tomato).